The following is a 521-amino-acid chain: uncharacterized protein (521 aa).

Residues 1-22 form the signal peptide; the sequence is MGFKLKGFGFLTLFASQAFLTA. The N-palmitoyl cysteine moiety is linked to residue cysteine 23. Cysteine 23 is lipidated: S-diacylglycerol cysteine.

The protein belongs to the MG067/MG068/MG395 family.

Its subcellular location is the cell membrane. This is an uncharacterized protein from Mycoplasma pneumoniae (strain ATCC 29342 / M129 / Subtype 1) (Mycoplasmoides pneumoniae).